The primary structure comprises 49 residues: Large ribosomal subunit protein eL40 (49 aa).

This sequence belongs to the eukaryotic ribosomal protein eL40 family.

The polypeptide is Large ribosomal subunit protein eL40 (Natronomonas pharaonis (strain ATCC 35678 / DSM 2160 / CIP 103997 / JCM 8858 / NBRC 14720 / NCIMB 2260 / Gabara) (Halobacterium pharaonis)).